The sequence spans 168 residues: Protein-export protein SecB (168 aa).

Belongs to the SecB family. As to quaternary structure, homotetramer, a dimer of dimers. One homotetramer interacts with 1 SecA dimer.

Its subcellular location is the cytoplasm. In terms of biological role, one of the proteins required for the normal export of preproteins out of the cell cytoplasm. It is a molecular chaperone that binds to a subset of precursor proteins, maintaining them in a translocation-competent state. It also specifically binds to its receptor SecA. The polypeptide is Protein-export protein SecB (Thioalkalivibrio sulfidiphilus (strain HL-EbGR7)).